A 550-amino-acid polypeptide reads, in one-letter code: Methionine--tRNA ligase (550 aa).

Residues 10-22 carry the 'HIGH' region motif; the sequence is LPYPNNSSPHLGN. The 'KMSKS' region signature appears at 336–340; sequence KFSKS. Lys-339 lines the ATP pocket.

This sequence belongs to the class-I aminoacyl-tRNA synthetase family.

It catalyses the reaction tRNA(Met) + L-methionine + ATP = L-methionyl-tRNA(Met) + AMP + diphosphate. This chain is Methionine--tRNA ligase (MARS), found in Acanthamoeba polyphaga mimivirus (APMV).